Here is a 396-residue protein sequence, read N- to C-terminus: Elongation factor Tu (396 aa).

The tr-type G domain occupies 10-205; sequence KPHVNIGTIG…ACDDSIPDPE (196 aa). The G1 stretch occupies residues 19–26; the sequence is GHVDHGKT. 19 to 26 provides a ligand contact to GTP; that stretch reads GHVDHGKT. Thr-26 provides a ligand contact to Mg(2+). The tract at residues 62–66 is G2; the sequence is GITIN. The G3 stretch occupies residues 83 to 86; it reads DAPG. GTP-binding positions include 83 to 87 and 138 to 141; these read DAPGH and NKCD. Positions 138 to 141 are G4; that stretch reads NKCD. A G5 region spans residues 175–177; it reads SAL.

Belongs to the TRAFAC class translation factor GTPase superfamily. Classic translation factor GTPase family. EF-Tu/EF-1A subfamily. In terms of assembly, monomer.

It localises to the cytoplasm. It carries out the reaction GTP + H2O = GDP + phosphate + H(+). GTP hydrolase that promotes the GTP-dependent binding of aminoacyl-tRNA to the A-site of ribosomes during protein biosynthesis. The sequence is that of Elongation factor Tu from Corynebacterium aurimucosum (strain ATCC 700975 / DSM 44827 / CIP 107346 / CN-1) (Corynebacterium nigricans).